The sequence spans 192 residues: MTLRVLGVDPGLTRCGIGVVDVERNRRATMVAVGVVGTSPDESLDQRLLVIATAIDEWLDRYEPQVLAVERVFSQLNVSTVMGVAQASGVVIAAAARRGIPVALHTPSEVKAAVTGSGSSNKDAVTKLVTKILRLDAPPRPADAADALALAITHAWRAGSGASVATTGPGSSSLTPAQRAWAEAEAKARRAR.

Active-site residues include D9, E70, and D143. Mg(2+) contacts are provided by D9, E70, and D143. Residues 161 to 192 form a disordered region; that stretch reads GASVATTGPGSSSLTPAQRAWAEAEAKARRAR. The segment covering 163 to 176 has biased composition (polar residues); the sequence is SVATTGPGSSSLTP. Residues 182 to 192 are compositionally biased toward basic and acidic residues; it reads AEAEAKARRAR.

Belongs to the RuvC family. In terms of assembly, homodimer which binds Holliday junction (HJ) DNA. The HJ becomes 2-fold symmetrical on binding to RuvC with unstacked arms; it has a different conformation from HJ DNA in complex with RuvA. In the full resolvosome a probable DNA-RuvA(4)-RuvB(12)-RuvC(2) complex forms which resolves the HJ. Mg(2+) serves as cofactor.

It is found in the cytoplasm. The enzyme catalyses Endonucleolytic cleavage at a junction such as a reciprocal single-stranded crossover between two homologous DNA duplexes (Holliday junction).. The RuvA-RuvB-RuvC complex processes Holliday junction (HJ) DNA during genetic recombination and DNA repair. Endonuclease that resolves HJ intermediates. Cleaves cruciform DNA by making single-stranded nicks across the HJ at symmetrical positions within the homologous arms, yielding a 5'-phosphate and a 3'-hydroxyl group; requires a central core of homology in the junction. The consensus cleavage sequence is 5'-(A/T)TT(C/G)-3'. Cleavage occurs on the 3'-side of the TT dinucleotide at the point of strand exchange. HJ branch migration catalyzed by RuvA-RuvB allows RuvC to scan DNA until it finds its consensus sequence, where it cleaves and resolves the cruciform DNA. The chain is Crossover junction endodeoxyribonuclease RuvC from Pseudarthrobacter chlorophenolicus (strain ATCC 700700 / DSM 12829 / CIP 107037 / JCM 12360 / KCTC 9906 / NCIMB 13794 / A6) (Arthrobacter chlorophenolicus).